The chain runs to 225 residues: Acidic leucine-rich nuclear phosphoprotein 32-related protein 2 (225 aa).

LRR repeat units follow at residues 39–60 (KLEL…PVLP), 61–82 (ALNY…DVLI), and 87–107 (EIKK…RTLK). The region spanning 121–161 (SSLGLLDDYRVKMFEMIPSLKILDGCDVDGEEVEEEFAAGE) is the LRRCT domain. Over residues 155–175 (EEFAAGEGAEDSDEGDSDEDG) the composition is skewed to acidic residues. The disordered stretch occupies residues 155–225 (EEFAAGEGAE…DEPEAKKSAE (71 aa)).

This sequence belongs to the ANP32 family.

This Caenorhabditis elegans protein is Acidic leucine-rich nuclear phosphoprotein 32-related protein 2.